Here is a 475-residue protein sequence, read N- to C-terminus: Aspartyl/glutamyl-tRNA(Asn/Gln) amidotransferase subunit B (475 aa).

This sequence belongs to the GatB/GatE family. GatB subfamily. In terms of assembly, heterotrimer of A, B and C subunits.

It carries out the reaction L-glutamyl-tRNA(Gln) + L-glutamine + ATP + H2O = L-glutaminyl-tRNA(Gln) + L-glutamate + ADP + phosphate + H(+). The catalysed reaction is L-aspartyl-tRNA(Asn) + L-glutamine + ATP + H2O = L-asparaginyl-tRNA(Asn) + L-glutamate + ADP + phosphate + 2 H(+). Its function is as follows. Allows the formation of correctly charged Asn-tRNA(Asn) or Gln-tRNA(Gln) through the transamidation of misacylated Asp-tRNA(Asn) or Glu-tRNA(Gln) in organisms which lack either or both of asparaginyl-tRNA or glutaminyl-tRNA synthetases. The reaction takes place in the presence of glutamine and ATP through an activated phospho-Asp-tRNA(Asn) or phospho-Glu-tRNA(Gln). The protein is Aspartyl/glutamyl-tRNA(Asn/Gln) amidotransferase subunit B of Caldanaerobacter subterraneus subsp. tengcongensis (strain DSM 15242 / JCM 11007 / NBRC 100824 / MB4) (Thermoanaerobacter tengcongensis).